Consider the following 207-residue polypeptide: Outer-membrane lipoprotein carrier protein (207 aa).

A signal peptide spans 1–21 (MRAIRMLLVSALAMGAVSAHA).

The protein belongs to the LolA family. In terms of assembly, monomer.

The protein localises to the periplasm. Participates in the translocation of lipoproteins from the inner membrane to the outer membrane. Only forms a complex with a lipoprotein if the residue after the N-terminal Cys is not an aspartate (The Asp acts as a targeting signal to indicate that the lipoprotein should stay in the inner membrane). This is Outer-membrane lipoprotein carrier protein from Pseudomonas entomophila (strain L48).